The chain runs to 380 residues: Cytochrome b (380 aa).

The next 4 helical transmembrane spans lie at 34–54, 78–99, 114–134, and 179–199; these read FGWL…FLAM, WLLR…YFHI, WNIG…GYVL, and FFTF…IHLL. 2 residues coordinate heme b: His-84 and His-98. Positions 183 and 197 each coordinate heme b. An a ubiquinone-binding site is contributed by His-202. A run of 4 helical transmembrane segments spans residues 227–247, 289–309, 321–341, and 348–368; these read FKDL…STFA, LGGV…PIIH, AAKA…WIGG, and FISI…LIIP.

It belongs to the cytochrome b family. The cytochrome bc1 complex contains 3 respiratory subunits (MT-CYB, CYC1 and UQCRFS1), 2 core proteins (UQCRC1 and UQCRC2) and probably 6 low-molecular weight proteins. The cofactor is heme b.

It is found in the mitochondrion inner membrane. In terms of biological role, component of the ubiquinol-cytochrome c reductase complex (complex III or cytochrome b-c1 complex) that is part of the mitochondrial respiratory chain. The b-c1 complex mediates electron transfer from ubiquinol to cytochrome c. Contributes to the generation of a proton gradient across the mitochondrial membrane that is then used for ATP synthesis. This is Cytochrome b (mt-cyb) from Rana dybowskii (Dybovsky's frog).